The following is a 295-amino-acid chain: tRNA-cytidine(32) 2-sulfurtransferase (295 aa).

Residues 63-68 (SGGKDS) carry the PP-loop motif motif. [4Fe-4S] cluster is bound by residues C138, C141, and C229.

It belongs to the TtcA family. Homodimer. Mg(2+) serves as cofactor. It depends on [4Fe-4S] cluster as a cofactor.

The protein resides in the cytoplasm. It carries out the reaction cytidine(32) in tRNA + S-sulfanyl-L-cysteinyl-[cysteine desulfurase] + AH2 + ATP = 2-thiocytidine(32) in tRNA + L-cysteinyl-[cysteine desulfurase] + A + AMP + diphosphate + H(+). Its pathway is tRNA modification. Its function is as follows. Catalyzes the ATP-dependent 2-thiolation of cytidine in position 32 of tRNA, to form 2-thiocytidine (s(2)C32). The sulfur atoms are provided by the cysteine/cysteine desulfurase (IscS) system. This is tRNA-cytidine(32) 2-sulfurtransferase from Hyphomonas neptunium (strain ATCC 15444).